Here is a 45-residue protein sequence, read N- to C-terminus: Alpha-conotoxin-like Lp1.10 (45 aa).

A propeptide spanning residues 1–27 (VVLGPASDGRNAAANVKAPDLIALTVR) is cleaved from the precursor. Intrachain disulfides connect cysteine 30–cysteine 36 and cysteine 31–cysteine 44. The tract at residues 32 to 34 (HNA) is lacks the Ser-Xaa-Pro motif that is crucial for potent interaction with nAChR. Cysteine 44 carries the post-translational modification Cysteine amide.

It belongs to the conotoxin A superfamily. As to expression, expressed by the venom duct.

The protein localises to the secreted. Its function is as follows. Alpha-conotoxins act on postsynaptic membranes, they bind to the nicotinic acetylcholine receptors (nAChR) and thus inhibit them. Has possibly a distinct nAChR binding mode from other alpha-conotoxins, due to a different three residue motif (lacks the Ser-Xaa-Pro motif). The protein is Alpha-conotoxin-like Lp1.10 of Conus leopardus (Leopard cone).